The chain runs to 236 residues: Probable fimbrial chaperone EcpE (236 aa).

Positions 1-27 (MFRRRGVTLTKALLTVVCMLAAPLTQA) are cleaved as a signal peptide.

Belongs to the EcpB/EcpE family.

Functionally, part of the ecpRABCDE operon, which encodes the E.coli common pilus (ECP). ECP is found in both commensal and pathogenic strains and plays a dual role in early-stage biofilm development and host cell recognition. This chain is Probable fimbrial chaperone EcpE (ecpE), found in Escherichia coli O18:K1:H7 (strain IHE3034 / ExPEC).